The chain runs to 135 residues: HTH-type transcriptional activator AarP (135 aa).

The 99-residue stretch at 22–120 folds into the HTH araC/xylS-type domain; sequence SEILVWIEGN…GISPSLYRLS (99 aa). 2 consecutive DNA-binding regions (H-T-H motif) follow at residues 39-60 and 87-110; these read DDIAQHSGYTKWHLQRVFRKIV and VIDIALKYQFDSQQSFAKRFKAYL.

Its function is as follows. Transcriptional activator of 2'-N-acetyltransferase. This is HTH-type transcriptional activator AarP (aarP) from Providencia stuartii.